Reading from the N-terminus, the 244-residue chain is ATP synthase subunit b 2 (244 aa).

Residues T2–L22 traverse the membrane as a helical segment.

Belongs to the ATPase B chain family. F-type ATPases have 2 components, F(1) - the catalytic core - and F(0) - the membrane proton channel. F(1) has five subunits: alpha(3), beta(3), gamma(1), delta(1), epsilon(1). F(0) has three main subunits: a(1), b(2) and c(10-14). The alpha and beta chains form an alternating ring which encloses part of the gamma chain. F(1) is attached to F(0) by a central stalk formed by the gamma and epsilon chains, while a peripheral stalk is formed by the delta and b chains.

The protein localises to the cell inner membrane. Functionally, f(1)F(0) ATP synthase produces ATP from ADP in the presence of a proton or sodium gradient. F-type ATPases consist of two structural domains, F(1) containing the extramembraneous catalytic core and F(0) containing the membrane proton channel, linked together by a central stalk and a peripheral stalk. During catalysis, ATP synthesis in the catalytic domain of F(1) is coupled via a rotary mechanism of the central stalk subunits to proton translocation. Its function is as follows. Component of the F(0) channel, it forms part of the peripheral stalk, linking F(1) to F(0). The sequence is that of ATP synthase subunit b 2 from Gluconobacter oxydans (strain 621H) (Gluconobacter suboxydans).